Consider the following 242-residue polypeptide: ATP synthase subunit a (242 aa).

6 helical membrane-spanning segments follow: residues 29–49 (SSIYMLLASILALTYFYLAFY), 84–104 (FIPLVFSLFIFILFCNLLGMT), 114–134 (IIVTFTLAILVFLMVTIVGFV), 140–160 (FLTLFLPHGTPLWLAPLMIVI), 181–201 (MAGHVLLKVIAGFTVSLMIYL), and 203–223 (FLPIPIMVILIGFEIFVAILQ).

This sequence belongs to the ATPase A chain family. As to quaternary structure, F-type ATPases have 2 components, CF(1) - the catalytic core - and CF(0) - the membrane proton channel. CF(1) has five subunits: alpha(3), beta(3), gamma(1), delta(1), epsilon(1). CF(0) has three main subunits: a(1), b(2) and c(9-12). The alpha and beta chains form an alternating ring which encloses part of the gamma chain. CF(1) is attached to CF(0) by a central stalk formed by the gamma and epsilon chains, while a peripheral stalk is formed by the delta and b chains.

The protein localises to the cell inner membrane. Its function is as follows. Key component of the proton channel; it plays a direct role in the translocation of protons across the membrane. This is ATP synthase subunit a from Rickettsia conorii (strain ATCC VR-613 / Malish 7).